Here is a 213-residue protein sequence, read N- to C-terminus: Large ribosomal subunit protein uL3 (213 aa).

A disordered region spans residues 135 to 155; sequence THGSKNHRLPGSTGAGTTPGR.

It belongs to the universal ribosomal protein uL3 family. Part of the 50S ribosomal subunit. Forms a cluster with proteins L14 and L19.

In terms of biological role, one of the primary rRNA binding proteins, it binds directly near the 3'-end of the 23S rRNA, where it nucleates assembly of the 50S subunit. The chain is Large ribosomal subunit protein uL3 from Synechocystis sp. (strain ATCC 27184 / PCC 6803 / Kazusa).